The sequence spans 140 residues: Small ribosomal subunit protein uS12 (140 aa).

Asp103 carries the post-translational modification 3-methylthioaspartic acid. Residues 120–140 (GVQKRMQARSKYGAKRPKKGK) form a disordered region. Residues 125 to 140 (MQARSKYGAKRPKKGK) show a composition bias toward basic residues.

The protein belongs to the universal ribosomal protein uS12 family. As to quaternary structure, part of the 30S ribosomal subunit. Contacts proteins S8 and S17. May interact with IF1 in the 30S initiation complex.

With S4 and S5 plays an important role in translational accuracy. Functionally, interacts with and stabilizes bases of the 16S rRNA that are involved in tRNA selection in the A site and with the mRNA backbone. Located at the interface of the 30S and 50S subunits, it traverses the body of the 30S subunit contacting proteins on the other side and probably holding the rRNA structure together. The combined cluster of proteins S8, S12 and S17 appears to hold together the shoulder and platform of the 30S subunit. The chain is Small ribosomal subunit protein uS12 from Desulfitobacterium hafniense (strain Y51).